The primary structure comprises 142 residues: Small ribosomal subunit protein uS12 (142 aa).

The protein belongs to the universal ribosomal protein uS12 family. As to quaternary structure, part of the 30S ribosomal subunit.

In terms of biological role, with S4 and S5 plays an important role in translational accuracy. Located at the interface of the 30S and 50S subunits. In Methanococcoides burtonii (strain DSM 6242 / NBRC 107633 / OCM 468 / ACE-M), this protein is Small ribosomal subunit protein uS12.